The following is a 328-amino-acid chain: Ketol-acid reductoisomerase (NADP(+)) (328 aa).

Residues 2-182 (AKIYRDVDAS…GATRAGVIET (181 aa)) enclose the KARI N-terminal Rossmann domain. Residues 25 to 28 (YGIQ), arginine 48, serine 53, and 83 to 86 (DMEQ) contribute to the NADP(+) site. The active site involves histidine 108. Glycine 134 serves as a coordination point for NADP(+). The 146-residue stretch at 183 to 328 (TFAEETETDL…IEMRRLLFGQ (146 aa)) folds into the KARI C-terminal knotted domain. Mg(2+) is bound by residues aspartate 191, glutamate 195, glutamate 227, and glutamate 231. Position 252 (serine 252) interacts with substrate.

Belongs to the ketol-acid reductoisomerase family. Requires Mg(2+) as cofactor.

The enzyme catalyses (2R)-2,3-dihydroxy-3-methylbutanoate + NADP(+) = (2S)-2-acetolactate + NADPH + H(+). It catalyses the reaction (2R,3R)-2,3-dihydroxy-3-methylpentanoate + NADP(+) = (S)-2-ethyl-2-hydroxy-3-oxobutanoate + NADPH + H(+). The protein operates within amino-acid biosynthesis; L-isoleucine biosynthesis; L-isoleucine from 2-oxobutanoate: step 2/4. It participates in amino-acid biosynthesis; L-valine biosynthesis; L-valine from pyruvate: step 2/4. Its function is as follows. Involved in the biosynthesis of branched-chain amino acids (BCAA). Catalyzes an alkyl-migration followed by a ketol-acid reduction of (S)-2-acetolactate (S2AL) to yield (R)-2,3-dihydroxy-isovalerate. In the isomerase reaction, S2AL is rearranged via a Mg-dependent methyl migration to produce 3-hydroxy-3-methyl-2-ketobutyrate (HMKB). In the reductase reaction, this 2-ketoacid undergoes a metal-dependent reduction by NADPH to yield (R)-2,3-dihydroxy-isovalerate. In Pyrobaculum arsenaticum (strain DSM 13514 / JCM 11321 / PZ6), this protein is Ketol-acid reductoisomerase (NADP(+)).